Reading from the N-terminus, the 157-residue chain is Dihydrofolate reductase type 5 (157 aa).

The DHFR domain occupies 2–156 (KVSLMAAKAK…INYCYQIWQK (155 aa)).

Belongs to the dihydrofolate reductase family. In terms of assembly, homodimer.

The enzyme catalyses (6S)-5,6,7,8-tetrahydrofolate + NADP(+) = 7,8-dihydrofolate + NADPH + H(+). It participates in cofactor biosynthesis; tetrahydrofolate biosynthesis; 5,6,7,8-tetrahydrofolate from 7,8-dihydrofolate: step 1/1. Functionally, key enzyme in folate metabolism. Catalyzes an essential reaction for de novo glycine and purine synthesis, and for DNA precursor synthesis. The sequence is that of Dihydrofolate reductase type 5 (dhfrV) from Escherichia coli.